The primary structure comprises 347 residues: S-adenosylmethionine:tRNA ribosyltransferase-isomerase (347 aa).

This sequence belongs to the QueA family. In terms of assembly, monomer.

The protein resides in the cytoplasm. The enzyme catalyses 7-aminomethyl-7-carbaguanosine(34) in tRNA + S-adenosyl-L-methionine = epoxyqueuosine(34) in tRNA + adenine + L-methionine + 2 H(+). Its pathway is tRNA modification; tRNA-queuosine biosynthesis. Functionally, transfers and isomerizes the ribose moiety from AdoMet to the 7-aminomethyl group of 7-deazaguanine (preQ1-tRNA) to give epoxyqueuosine (oQ-tRNA). The polypeptide is S-adenosylmethionine:tRNA ribosyltransferase-isomerase (Halalkalibacterium halodurans (strain ATCC BAA-125 / DSM 18197 / FERM 7344 / JCM 9153 / C-125) (Bacillus halodurans)).